We begin with the raw amino-acid sequence, 84 residues long: Neurotoxin BmK-M10 (84 aa).

The signal sequence occupies residues 1-19; that stretch reads MNYLVMISFALLLMKGVES. In terms of domain architecture, LCN-type CS-alpha/beta spans 21–83; sequence RDAYIAKPEN…VPIRVPGKCQ (63 aa). 4 disulfide bridges follow: cysteine 31–cysteine 82, cysteine 35–cysteine 55, cysteine 41–cysteine 65, and cysteine 45–cysteine 67. A propeptide (removed by a carboxypeptidase) is located at residue arginine 84.

As to expression, expressed by the venom gland.

Its subcellular location is the secreted. Its function is as follows. Binds to voltage-dependent sodium channels (Nav) and voltage-dependent delayed rectifier potassium channels and inhibits the inactivation of the activated channels, thereby blocking neuronal transmission. Administration to mice at a dosage of 0.8 mg/kg produces an analgesic effect. In Olivierus martensii (Manchurian scorpion), this protein is Neurotoxin BmK-M10.